The chain runs to 269 residues: 5'-nucleotidase SurE (269 aa).

4 residues coordinate a divalent metal cation: Asp8, Asp9, Ser40, and Asn93.

This sequence belongs to the SurE nucleotidase family. Requires a divalent metal cation as cofactor.

The protein resides in the cytoplasm. The enzyme catalyses a ribonucleoside 5'-phosphate + H2O = a ribonucleoside + phosphate. Functionally, nucleotidase that shows phosphatase activity on nucleoside 5'-monophosphates. This chain is 5'-nucleotidase SurE, found in Caulobacter sp. (strain K31).